Here is a 219-residue protein sequence, read N- to C-terminus: Large ribosomal subunit protein eL13 (219 aa).

The disordered stretch occupies residues 198 to 219; that stretch reads KDAAENPDDVTKAPTAVKRNKT.

Belongs to the eukaryotic ribosomal protein eL13 family. In terms of assembly, component of the 60S large ribosomal subunit (LSU).

Its subcellular location is the cytoplasm. Functionally, component of the ribosome, a large ribonucleoprotein complex responsible for the synthesis of proteins in the cell. The small ribosomal subunit (SSU) binds messenger RNAs (mRNAs) and translates the encoded message by selecting cognate aminoacyl-transfer RNA (tRNA) molecules. The large subunit (LSU) contains the ribosomal catalytic site termed the peptidyl transferase center (PTC), which catalyzes the formation of peptide bonds, thereby polymerizing the amino acids delivered by tRNAs into a polypeptide chain. The nascent polypeptides leave the ribosome through a tunnel in the LSU and interact with protein factors that function in enzymatic processing, targeting, and the membrane insertion of nascent chains at the exit of the ribosomal tunnel. As part of the LSU, it is probably required for its formation and the maturation of rRNAs. This is Large ribosomal subunit protein eL13 (RpL13) from Spodoptera frugiperda (Fall armyworm).